Consider the following 301-residue polypeptide: Peptidyl-prolyl cis-trans isomerase E (301 aa).

Residues 5–83 (KRVLYVGGLA…GRTIRVNLAK (79 aa)) enclose the RRM domain. Phosphoserine is present on residues serine 91, serine 97, and serine 119. The segment at 107–140 (GKTLEENKEEEGSEPPKAETQEGEPAAKKARSNP) is disordered. The PPIase cyclophilin-type domain occupies 143–299 (YMDIKIGNKP…QKVIIADCGE (157 aa)).

Belongs to the cyclophilin-type PPIase family. PPIase E subfamily. As to quaternary structure, identified in the spliceosome C complex. Component of the XAB2 complex, a multimeric protein complex composed of XAB2, PRPF19, AQR, ZNF830, ISY1, and PPIE. Identified in a pentameric intron-binding (IB) complex composed of AQR, XAB2, ISY1, ZNF830 and PPIE that is incorporated into the spliceosome as a preassembled complex. The IB complex does not contain PRPF19. Interacts (via RNA-binding domain) with KMT2A (via the third PHD-type zinc-finger).

Its subcellular location is the nucleus. It catalyses the reaction [protein]-peptidylproline (omega=180) = [protein]-peptidylproline (omega=0). Involved in pre-mRNA splicing as component of the spliceosome. Combines RNA-binding and PPIase activities. Binds mRNA and has a preference for single-stranded RNA molecules with poly-A and poly-U stretches, suggesting it binds to the poly(A)-region in the 3'-UTR of mRNA molecules. Catalyzes the cis-trans isomerization of proline imidic peptide bonds in proteins. Inhibits KMT2A activity; this requires proline isomerase activity. The sequence is that of Peptidyl-prolyl cis-trans isomerase E (PPIE) from Pongo abelii (Sumatran orangutan).